The primary structure comprises 191 residues: Peptidyl-tRNA hydrolase (191 aa).

Y14 is a tRNA binding site. H19 acts as the Proton acceptor in catalysis. TRNA contacts are provided by Y64, N66, and N112.

Belongs to the PTH family. Monomer.

The protein resides in the cytoplasm. The catalysed reaction is an N-acyl-L-alpha-aminoacyl-tRNA + H2O = an N-acyl-L-amino acid + a tRNA + H(+). Its function is as follows. Hydrolyzes ribosome-free peptidyl-tRNAs (with 1 or more amino acids incorporated), which drop off the ribosome during protein synthesis, or as a result of ribosome stalling. Catalyzes the release of premature peptidyl moieties from peptidyl-tRNA molecules trapped in stalled 50S ribosomal subunits, and thus maintains levels of free tRNAs and 50S ribosomes. The polypeptide is Peptidyl-tRNA hydrolase (Syntrophotalea carbinolica (strain DSM 2380 / NBRC 103641 / GraBd1) (Pelobacter carbinolicus)).